We begin with the raw amino-acid sequence, 126 residues long: Protein Wnt-1 (126 aa).

A lipid anchor (O-palmitoleoyl serine; by PORCN) is attached at Ser-1. Cys-92 and Cys-107 are disulfide-bonded. Asn-93 and Asn-94 each carry an N-linked (GlcNAc...) asparagine glycan.

This sequence belongs to the Wnt family. Post-translationally, palmitoleoylation is required for efficient binding to frizzled receptors. Palmitoleoylation is necessary for proper trafficking to cell surface. Depalmitoleoylated by NOTUM, leading to inhibit Wnt signaling pathway.

It localises to the secreted. The protein localises to the extracellular space. The protein resides in the extracellular matrix. Functionally, ligand for members of the frizzled family of seven transmembrane receptors. Probable developmental protein. In Alopias vulpinus (Common thresher shark), this protein is Protein Wnt-1 (WNT-1).